Reading from the N-terminus, the 124-residue chain is Glucagon-1 (124 aa).

The signal sequence occupies residues 1 to 25; it reads MKRIHSLAGILLVLGLIQSSCRVLM. The disordered stretch occupies residues 28 to 54; that stretch reads ADPSSSLEADSTLKDEPRELSNMKRHS. Positions 38 to 54 are enriched in basic and acidic residues; sequence STLKDEPRELSNMKRHS. The propeptide occupies 84–88; it reads SGVAE.

Belongs to the glucagon family.

It is found in the secreted. Functionally, glucagon plays a key role in glucose metabolism and homeostasis. Regulates blood glucose by increasing gluconeogenesis and decreasing glycolysis. The protein is Glucagon-1 (gcg1) of Lophius americanus (American angler).